The following is a 491-amino-acid chain: Protein LDB17 (491 aa).

Ser7 is subject to Phosphoserine. The tract at residues 413 to 491 (ETPSTPSDGG…PPSRKCGTPK (79 aa)) is disordered. Positions 414-435 (TPSTPSDGGSSVSSNNTSRNSS) are enriched in low complexity. A phosphoserine mark is found at Ser463 and Ser466. The span at 474-484 (APPPPPPPPPS) shows a compositional bias: pro residues.

The protein belongs to the LDB17 family.

The protein localises to the cytoplasm. It localises to the bud. It is found in the bud neck. In terms of biological role, may be involved in protein-linked oligosaccharide phosphorylation since the deletion reduces the negative charge of the cell surface. The chain is Protein LDB17 (LDB17) from Saccharomyces cerevisiae (strain ATCC 204508 / S288c) (Baker's yeast).